The following is a 70-amino-acid chain: Large ribosomal subunit protein eL38 (70 aa).

It belongs to the eukaryotic ribosomal protein eL38 family.

This Caenorhabditis elegans protein is Large ribosomal subunit protein eL38 (rpl-38).